A 267-amino-acid polypeptide reads, in one-letter code: MSNKVHLGHTARKRFGQNFLTDENVINRIVGAISPDNDHVMVEIGPGLAALTEPVASGIDKLIVVELDKDLVERLKEHPVLKDKLEIHQGDALKFDFNQLVREDKQMKVFGNLPYNISTPLMFHLFEFAQHIENMHFMLQKEVVLRLSASPGTKAYGRLTVMAQYHCQVMPVLEVPPGCFTPPPKVDSAVVRLVPYKVKPWPCKDVDLLRNLTTTAFNMRRKTLRNNLKQLLSDEDFAVLGIDATLRPEQISVEQYVAMANHVFDRK.

6 residues coordinate S-adenosyl-L-methionine: N18, L20, G45, E66, D91, and N112.

The protein belongs to the class I-like SAM-binding methyltransferase superfamily. rRNA adenine N(6)-methyltransferase family. RsmA subfamily.

It is found in the cytoplasm. The enzyme catalyses adenosine(1518)/adenosine(1519) in 16S rRNA + 4 S-adenosyl-L-methionine = N(6)-dimethyladenosine(1518)/N(6)-dimethyladenosine(1519) in 16S rRNA + 4 S-adenosyl-L-homocysteine + 4 H(+). Its function is as follows. Specifically dimethylates two adjacent adenosines (A1518 and A1519) in the loop of a conserved hairpin near the 3'-end of 16S rRNA in the 30S particle. May play a critical role in biogenesis of 30S subunits. This chain is Ribosomal RNA small subunit methyltransferase A, found in Shewanella pealeana (strain ATCC 700345 / ANG-SQ1).